The sequence spans 35 residues: uncharacterized protein (35 aa).

The N-terminal stretch at 1 to 25 (MTERKLLQLLRRPFISLSLFTALRA) is a signal peptide.

This is an uncharacterized protein from Saccharomyces cerevisiae (strain ATCC 204508 / S288c) (Baker's yeast).